The following is a 541-amino-acid chain: Peptidyl-prolyl isomerase cwc-27 (541 aa).

The PPIase cyclophilin-type domain occupies 11–193 (PTASAIIHTT…YPIKITRIEI (183 aa)). Disordered stretches follow at residues 199–443 (DDMQ…GQAD) and 513–541 (TLKE…RDRH). Composition is skewed to basic and acidic residues over residues 279–307 (AKRD…ESRR), 316–348 (QKKE…KTNE), and 361–374 (IHSE…KKSA). Over residues 432-442 (DVEDGEQDGQA) the composition is skewed to acidic residues. 2 stretches are compositionally biased toward basic and acidic residues: residues 513–525 (TLKE…RDAK) and 532–541 (AWDRGRRDRH).

Belongs to the cyclophilin-type PPIase family. CWC27 subfamily. In terms of assembly, associated with the spliceosome.

It is found in the cytoplasm. Its subcellular location is the nucleus. The catalysed reaction is [protein]-peptidylproline (omega=180) = [protein]-peptidylproline (omega=0). PPIases accelerate the folding of proteins. It catalyzes the cis-trans isomerization of proline imidic peptide bonds in oligopeptides. Involved in pre-mRNA splicing. This Neurospora crassa (strain ATCC 24698 / 74-OR23-1A / CBS 708.71 / DSM 1257 / FGSC 987) protein is Peptidyl-prolyl isomerase cwc-27 (cwc-27).